Here is a 361-residue protein sequence, read N- to C-terminus: Ornithine carbamoyltransferase, mitochondrial (361 aa).

Residues 1–24 (MIPTARCGALRQKIPVQAVRQYSS) constitute a mitochondrion transit peptide. Carbamoyl phosphate is bound by residues 89 to 92 (STRT), Arg-140, His-167, and Gln-170. L-ornithine-binding residues include Asn-207, Asp-273, Ser-277, and Met-278. Cys-315 (proton acceptor) is an active-site residue. Residues 315–316 (CL) and Arg-342 contribute to the carbamoyl phosphate site.

This sequence belongs to the aspartate/ornithine carbamoyltransferase superfamily. OTCase family. As to quaternary structure, homotrimer.

It is found in the mitochondrion matrix. The enzyme catalyses carbamoyl phosphate + L-ornithine = L-citrulline + phosphate + H(+). It functions in the pathway amino-acid biosynthesis; L-arginine biosynthesis; L-arginine from L-ornithine and carbamoyl phosphate: step 1/3. The chain is Ornithine carbamoyltransferase, mitochondrial (arg1) from Aspergillus terreus.